The following is a 37-amino-acid chain: Large ribosomal subunit protein bL36c (37 aa).

Belongs to the bacterial ribosomal protein bL36 family.

Its subcellular location is the plastid. The protein localises to the chloroplast. This is Large ribosomal subunit protein bL36c from Stigeoclonium helveticum (Green alga).